Here is a 253-residue protein sequence, read N- to C-terminus: MITNTAAYQFAPIHDPQQLADSVLERAQQRALKGSVLVAEEGINLFLAGDAEQIAGFYAWLHADARFAQMRVKYSHSAEQPFARLKVKVKPEIISFRRDDASPLQGRAPSVAPAMLRKWMQQGHDDHGRPLVLLDTRNAQEVAYGTFQGALTLPIDKFTELPEALQPHRAALADATVVSFCTGGIRCEKAALWMHAEGMDNVLQLEGGILGYFEDVGGEGYDGRCFVFDERVALDAELRPLGDGAACADAGKI.

The Rhodanese domain maps to 127–221; it reads HGRPLVLLDT…YFEDVGGEGY (95 aa). Catalysis depends on C181, which acts as the Cysteine persulfide intermediate.

The protein belongs to the TrhO family.

It catalyses the reaction uridine(34) in tRNA + AH2 + O2 = 5-hydroxyuridine(34) in tRNA + A + H2O. Its function is as follows. Catalyzes oxygen-dependent 5-hydroxyuridine (ho5U) modification at position 34 in tRNAs. This is tRNA uridine(34) hydroxylase from Xanthomonas campestris pv. campestris (strain B100).